The chain runs to 692 residues: Elongation factor G (692 aa).

Residues 8 to 282 form the tr-type G domain; sequence DKTRNIGIMA…AVLDYLPAPT (275 aa). GTP contacts are provided by residues 17–24, 81–85, and 135–138; these read AHIDAGKT, DTPGH, and NKMD.

The protein belongs to the TRAFAC class translation factor GTPase superfamily. Classic translation factor GTPase family. EF-G/EF-2 subfamily.

It is found in the cytoplasm. Functionally, catalyzes the GTP-dependent ribosomal translocation step during translation elongation. During this step, the ribosome changes from the pre-translocational (PRE) to the post-translocational (POST) state as the newly formed A-site-bound peptidyl-tRNA and P-site-bound deacylated tRNA move to the P and E sites, respectively. Catalyzes the coordinated movement of the two tRNA molecules, the mRNA and conformational changes in the ribosome. The protein is Elongation factor G of Bacillus pumilus (strain SAFR-032).